Consider the following 541-residue polypeptide: Chlorophyllide a oxygenase, chloroplastic (541 aa).

Residues 114 to 151 (LAREFKSIGTLRKELAELQEELAKAHNQVHLSETRVSS) are a coiled coil. The span at 178–192 (AECTSLAPSTSSASR) shows a compositional bias: polar residues. A disordered region spans residues 178–208 (AECTSLAPSTSSASRVVNKKPPRRSLNVSGP). Residues 220–320 (WYPVAFSSDL…CFEQEGMVWI (101 aa)) form the Rieske domain. [2Fe-2S] cluster-binding residues include Cys261, His263, Cys280, and His283. Asp359, Asp363, His366, and His371 together coordinate Fe cation.

Expressed in leaves and germinating seedlings, but not in sheaths and roots.

Its subcellular location is the plastid. It is found in the chloroplast membrane. It localises to the chloroplast thylakoid membrane. It carries out the reaction chlorophyllide a + 2 NADPH + 2 O2 + 2 H(+) = chlorophyllide b + 2 NADP(+) + 3 H2O. Functionally, catalyzes a two-step oxygenase reaction involved in the synthesis of chlorophyll b. Acts specifically on the non-esterified chlorophyllide a and not on chlorophyll a. The protein is Chlorophyllide a oxygenase, chloroplastic (CAO) of Oryza sativa subsp. japonica (Rice).